Reading from the N-terminus, the 106-residue chain is Large ribosomal subunit protein bL21 (106 aa).

Belongs to the bacterial ribosomal protein bL21 family. As to quaternary structure, part of the 50S ribosomal subunit. Contacts protein L20.

Functionally, this protein binds to 23S rRNA in the presence of protein L20. The chain is Large ribosomal subunit protein bL21 from Chlamydia abortus (strain DSM 27085 / S26/3) (Chlamydophila abortus).